An 873-amino-acid chain; its full sequence is Inner centromere protein A (873 aa).

7 disordered regions span residues 50–124 (AEPE…KRMT), 237–270 (PANE…VVRK), 282–452 (FSLA…PPPH), 484–535 (KRNT…KVRR), 566–649 (QIDE…LAEQ), 683–736 (LERA…EQAA), and 781–800 (DLNS…PIPA). The span at 60-69 (SQKRRRKKRT) shows a compositional bias: basic residues. The span at 87-105 (RQSNASWSSSVRRLSVRNQ) shows a compositional bias: low complexity. Residues 239–254 (NEQQLNLSNQSATPTG) are compositionally biased toward polar residues. Over residues 261 to 270 (SVRRSLVVRK) the composition is skewed to basic residues. Residues 286–297 (SKRESMTREAVR) are compositionally biased toward basic and acidic residues. A compositionally biased stretch (low complexity) spans 314–325 (SSTSSQRSYQSS). Residues 437–452 (PSPPCPPSKIVRPPPH) are compositionally biased toward pro residues. 4 stretches are compositionally biased toward basic and acidic residues: residues 491-535 (TDPK…KVRR), 566-584 (QIDE…EEKA), 591-649 (KKQE…LAEQ), and 683-733 (LERA…KAKE). Positions 494–707 (KTEEKERQRL…EERKKREQQE (214 aa)) are SAH. An IN box region spans residues 782–856 (LNSDDSTDDE…RTSSAVWHSP (75 aa)). Phosphoserine is present on residues S849 and S850.

This sequence belongs to the INCENP family. In terms of assembly, component of the CPC composed of survivin/birc5, incenp, cdca8/borealin and/or cdca9/dasra-A, and aurkb/aurora-B. Interacts (via C-terminus) with aurkb (via N-terminus and kinase domain). Interacts (via N-terminus) with birc5.1, birc5.2, cdca8 and cdca9. Interacts with mtus1.

The protein resides in the nucleus. It localises to the chromosome. It is found in the centromere. Its subcellular location is the cytoplasm. The protein localises to the cytoskeleton. The protein resides in the spindle. It localises to the midbody. It is found in the kinetochore. Its function is as follows. Component of the chromosomal passenger complex (CPC), a complex that acts as a key regulator of mitosis. The CPC complex has essential functions at the centromere in ensuring correct chromosome alignment and segregation and is required for chromatin-induced microtubule stabilization and spindle assembly. Acts as a scaffold regulating CPC localization and activity. The C-terminus associates with aurkb/aurora-B, the N-terminus associated with cdca8/borealin and/or cdca9/dasra-A tethers the CPC to the inner centromere, and the microtubule binding activity within the central SAH domain directs aurkb/aurora-B toward substrates near microtubules. Activates aurkb. The protein is Inner centromere protein A (incenp-a) of Xenopus laevis (African clawed frog).